We begin with the raw amino-acid sequence, 837 residues long: Putative outer membrane protein assembly factor TP_0326 (837 aa).

An N-terminal signal peptide occupies residues 1–21 (MLKKASAFLIASCCVMSLAWA). Residues 22 to 433 (QANDNWYEGK…ILNVEEQSTA (412 aa)) are Periplasmic-facing. POTRA domains lie at 31 to 105 (KPIS…VKER), 106 to 182 (PSVK…IQEG), 185 to 273 (TVVS…VVEG), 276 to 354 (YRYG…VVER), and 357 to 430 (SHVE…VEEQ). The beta stranded transmembrane segment at 434 to 442 (NVQFGVTFS) threads the bilayer. At 443–450 (GVGEAGTF) the chain is on the extracellular; loop L1 side. Residues 451-461 (PLSLFCQWEEK) traverse the membrane as a beta stranded segment. Over 462 to 468 (NFLGKGN) the chain is Periplasmic. Residues 469 to 476 (EISVNATL) traverse the membrane as a beta stranded segment. Topologically, residues 477–478 (GS) are extracellular; loop L2. A beta stranded membrane pass occupies residues 479–489 (EAQSLKLGYVE). The Periplasmic portion of the chain corresponds to 490-499 (RWFLGSPLTV). A beta stranded transmembrane segment spans residues 500–520 (GFDFELTHKNLFVYRAGSYGN). At 521-530 (GLPHPYTSRE) the chain is on the extracellular; loop L3 side. Residues 531 to 543 (QWASSPGLAESFR) form a beta stranded membrane-spanning segment. Over 544-554 (LKYSRFESAIG) the chain is Periplasmic. A beta stranded transmembrane segment spans residues 555–568 (AHTGYQWYPRYAVI). The Extracellular; loop L4 segment spans residues 569-601 (RVNGGVDFRVVKNFYDKDNNQPFDLTVKEQLNW). A beta stranded transmembrane segment spans residues 602 to 615 (TSINSFWTSVSFDG). The Periplasmic segment spans residues 616–623 (RDFAYDPS). A beta stranded transmembrane segment spans residues 624-636 (SGWFLGQRCTFNG). At 637–644 (LVPFLEKE) the chain is on the extracellular; loop L5 side. Residues 645-658 (HSFRSDTKAEFYVT) traverse the membrane as a beta stranded segment. The Periplasmic portion of the chain corresponds to 659–667 (LLNYPVSAV). The beta stranded transmembrane segment at 668-682 (WNLKFVLAFYTGVSV) threads the bilayer. The Extracellular; loop L6 portion of the chain corresponds to 683 to 724 (QTYYGRRKSENGKGNGVRSGALVIDGVLVGRGWSEDAKKNTG). The beta stranded transmembrane segment at 725–736 (DLLLHHWIEFRW) threads the bilayer. Residues 737–741 (PLAHG) are Periplasmic-facing. A beta stranded transmembrane segment spans residues 742-756 (IVSFDFFFDAAMVYN). At 757-786 (IESQSPNGSSSASSSSSSSSSSSRTTSSEG) the chain is on the extracellular; loop L7 side. Residues 761–785 (SPNGSSSASSSSSSSSSSSRTTSSE) form a disordered region. A compositionally biased stretch (low complexity) spans 765–784 (SSSASSSSSSSSSSSRTTSS). A beta stranded membrane pass occupies residues 787-799 (LYKMSYGPGLRFT). Residues 800 to 802 (LPQ) are Periplasmic-facing. The beta stranded transmembrane segment at 803–814 (FPLKLAFANTFT) threads the bilayer. The Extracellular; loop L8 segment spans residues 815–824 (SPGGIPKTKK). The beta stranded transmembrane segment at 825–829 (NWNFV) threads the bilayer. At 830-837 (LSFTVNNL) the chain is on the periplasmic side.

It belongs to the BamA family. As to quaternary structure, part of 2 complexes of about 239 and 164 kDa.

The protein resides in the cell outer membrane. Functionally, might be part of the outer membrane protein assembly complex, which is involved in assembly and insertion of beta-barrel proteins into the outer membrane. Both rabbit immune serum and rabbit antiserum specific for extracytoplasmic loop L4 promote bacteria internalization by rabbit peritoneal macrophages. Pools of human syphilitic sera from the USA and Columbia recognize both the N-terminal POTRA-containing and C-terminal beta-barrel domains as well as loop L4, showing this protein stimulates the immune system in both humans and rabbits. This Treponema pallidum (strain Nichols) protein is Putative outer membrane protein assembly factor TP_0326 (tp92).